The sequence spans 228 residues: Prepilin leader peptidase/N-methyltransferase (228 aa).

The next 6 membrane-spanning stretches (helical) occupy residues 18-38 (LWGS…NVVI), 95-115 (RYPL…YLMA), 116-136 (PGVP…LAAI), 147-167 (LTLP…YVPL), 168-188 (AEAV…YWVF), and 204-224 (LLAA…LLLA).

This sequence belongs to the peptidase A24 family.

The protein localises to the cell inner membrane. It catalyses the reaction Typically cleaves a -Gly-|-Phe- bond to release an N-terminal, basic peptide of 5-8 residues from type IV prepilin, and then N-methylates the new N-terminal amino group, the methyl donor being S-adenosyl-L-methionine.. Its function is as follows. Plays an essential role in type IV pili and type II pseudopili formation by proteolytically removing the leader sequence from substrate proteins and subsequently monomethylating the alpha-amino group of the newly exposed N-terminal phenylalanine. This chain is Prepilin leader peptidase/N-methyltransferase (pulO), found in Klebsiella pneumoniae.